Reading from the N-terminus, the 285-residue chain is MKDYVGAHMSIAGGIHNAPERGVKAGCGVIQLFTQNTNQWRGKLISDPDILLFKEKLAESGLNEVISHDIYLINLASAPGEIRDKSLNGFQEEMIRCSRLGIGKIVMHPGSHNGDGEEVGLRRIIEAFDYLIAETPAYSGKILLETTAGQGTNLGYTFEHLRTIIEGSAHPDRFGVCYDTCHTFAAGYDITSAAAYGQVWEEFDRIIGLDRLQCFHFNDSKKGLNCRIDRHEHIGKGAIGATAFSLIMNDPRFAGIPKILETPKGDNNEMDEINLKLLRDMVKQR.

Zn(2+) is bound by residues His-68, His-108, Glu-145, Asp-179, His-182, His-216, Asp-229, His-231, and Glu-261.

It belongs to the AP endonuclease 2 family. Requires Zn(2+) as cofactor.

It catalyses the reaction Endonucleolytic cleavage to 5'-phosphooligonucleotide end-products.. Functionally, endonuclease IV plays a role in DNA repair. It cleaves phosphodiester bonds at apurinic or apyrimidinic (AP) sites, generating a 3'-hydroxyl group and a 5'-terminal sugar phosphate. This is Probable endonuclease 4 from Geotalea daltonii (strain DSM 22248 / JCM 15807 / FRC-32) (Geobacter daltonii).